The primary structure comprises 166 residues: NAD(P)H-quinone oxidoreductase subunit I, chloroplastic (166 aa).

4Fe-4S ferredoxin-type domains are found at residues 55-84 (GRIH…VDWK) and 95-124 (LNYS…MTEE). Positions 64, 67, 70, 74, 104, 107, 110, and 114 each coordinate [4Fe-4S] cluster.

The protein belongs to the complex I 23 kDa subunit family. NDH is composed of at least 16 different subunits, 5 of which are encoded in the nucleus. [4Fe-4S] cluster serves as cofactor.

The protein localises to the plastid. Its subcellular location is the chloroplast thylakoid membrane. It catalyses the reaction a plastoquinone + NADH + (n+1) H(+)(in) = a plastoquinol + NAD(+) + n H(+)(out). The enzyme catalyses a plastoquinone + NADPH + (n+1) H(+)(in) = a plastoquinol + NADP(+) + n H(+)(out). Its function is as follows. NDH shuttles electrons from NAD(P)H:plastoquinone, via FMN and iron-sulfur (Fe-S) centers, to quinones in the photosynthetic chain and possibly in a chloroplast respiratory chain. The immediate electron acceptor for the enzyme in this species is believed to be plastoquinone. Couples the redox reaction to proton translocation, and thus conserves the redox energy in a proton gradient. The polypeptide is NAD(P)H-quinone oxidoreductase subunit I, chloroplastic (Sigesbeckia blakei).